Reading from the N-terminus, the 399-residue chain is 1-deoxy-D-xylulose 5-phosphate reductoisomerase (399 aa).

Positions 11, 12, 13, 14, 37, 39, and 125 each coordinate NADPH. Position 126 (K126) interacts with 1-deoxy-D-xylulose 5-phosphate. E127 is an NADPH binding site. D151 serves as a coordination point for Mn(2+). Residues S152, E153, S177, and H200 each coordinate 1-deoxy-D-xylulose 5-phosphate. E153 is a Mn(2+) binding site. NADPH is bound at residue G206. Residues S213, N218, K219, and E222 each coordinate 1-deoxy-D-xylulose 5-phosphate. Mn(2+) is bound at residue E222.

Belongs to the DXR family. Requires Mg(2+) as cofactor. Mn(2+) serves as cofactor.

It catalyses the reaction 2-C-methyl-D-erythritol 4-phosphate + NADP(+) = 1-deoxy-D-xylulose 5-phosphate + NADPH + H(+). It participates in isoprenoid biosynthesis; isopentenyl diphosphate biosynthesis via DXP pathway; isopentenyl diphosphate from 1-deoxy-D-xylulose 5-phosphate: step 1/6. In terms of biological role, catalyzes the NADPH-dependent rearrangement and reduction of 1-deoxy-D-xylulose-5-phosphate (DXP) to 2-C-methyl-D-erythritol 4-phosphate (MEP). This chain is 1-deoxy-D-xylulose 5-phosphate reductoisomerase, found in Nostoc sp. (strain PCC 7120 / SAG 25.82 / UTEX 2576).